We begin with the raw amino-acid sequence, 1148 residues long: Trafficking protein particle complex subunit 9 (1148 aa).

Serine 566 and serine 953 each carry phosphoserine.

This sequence belongs to the NIBP family. In terms of assembly, component of the multisubunit TRAPP (transport protein particle) complex, which includes at least TRAPPC2, TRAPPC2L, TRAPPC3, TRAPPC3L, TRAPPC4, TRAPPC5, TRAPPC8, TRAPPC9, TRAPPC10, TRAPPC11 and TRAPPC12. Directly interacts with IKBKB and MAP3K14. As to expression, expressed in neurons of the pyramidal layer of the cortex, in spinal cord motor neurons and white matter neurons (at protein level).

Its subcellular location is the golgi apparatus. It localises to the cis-Golgi network. The protein resides in the endoplasmic reticulum. It is found in the cytoplasm. In terms of biological role, functions as an activator of NF-kappa-B through increased phosphorylation of the IKK complex. May function in neuronal cells differentiation. May play a role in vesicular transport from endoplasmic reticulum to Golgi. This Mus musculus (Mouse) protein is Trafficking protein particle complex subunit 9 (Trappc9).